Reading from the N-terminus, the 236-residue chain is MKAAIIGAMEEEVAILRSRMEEREEVVIAGCEFSTGRLDGVEAVLLKSGIGKVNAAMGTTLLLDRFRPDFVINTGSAGGFLPSLRVGDLVISDEVVHHDVDVTAFGYAYGQVPGLPARYRADEALVEAAKQAAAQLDGLQAAIGLIATGDSFMNDPKRVEFVRGQFPELCAVEMEAAAIAQVCVQFGTPFVIIRALSDIAGEESNVSFEQFLETAAKHSAELVLSMLTVVQSKAKQ.

Glu12 (proton acceptor) is an active-site residue. Residues Gly78, Met153, and Met174–Glu175 each bind substrate. Asp198 (proton donor) is an active-site residue.

It belongs to the PNP/UDP phosphorylase family. MtnN subfamily.

The catalysed reaction is S-adenosyl-L-homocysteine + H2O = S-(5-deoxy-D-ribos-5-yl)-L-homocysteine + adenine. It carries out the reaction S-methyl-5'-thioadenosine + H2O = 5-(methylsulfanyl)-D-ribose + adenine. It catalyses the reaction 5'-deoxyadenosine + H2O = 5-deoxy-D-ribose + adenine. It functions in the pathway amino-acid biosynthesis; L-methionine biosynthesis via salvage pathway; S-methyl-5-thio-alpha-D-ribose 1-phosphate from S-methyl-5'-thioadenosine (hydrolase route): step 1/2. Functionally, catalyzes the irreversible cleavage of the glycosidic bond in both 5'-methylthioadenosine (MTA) and S-adenosylhomocysteine (SAH/AdoHcy) to adenine and the corresponding thioribose, 5'-methylthioribose and S-ribosylhomocysteine, respectively. Also cleaves 5'-deoxyadenosine, a toxic by-product of radical S-adenosylmethionine (SAM) enzymes, into 5-deoxyribose and adenine. The polypeptide is 5'-methylthioadenosine/S-adenosylhomocysteine nucleosidase (Geobacillus thermodenitrificans (strain NG80-2)).